Consider the following 375-residue polypeptide: POU domain, class 3, transcription factor 1-B (375 aa).

Disordered regions lie at residues 1–29 (MAAT…RMHQ), 56–139 (MSLT…QPLI), and 151–200 (MLGP…PSSD). 3 stretches are compositionally biased toward polar residues: residues 107–117 (VHQQTPSSHAW), 129–139 (SPGSNSHQPLI), and 151–160 (MLGPQASSLH). Basic and acidic residues predominate over residues 162-178 (SMRDPLHDDPGVHDTHV). The region spanning 194–268 (EDAPSSDDLE…LLNKWLEETD (75 aa)) is the POU-specific domain. A DNA-binding region (homeobox) is located at residues 286 to 345 (KRKKRTSIEVGVKGALENHFLKCPKPSAHEITSLADSLQLEKEVVRVWFCNRRQKEKRMT).

Belongs to the POU transcription factor family. Class-3 subfamily.

The protein resides in the nucleus. Acts as a transcription factor. May play a role in neuronal differentiation. The protein is POU domain, class 3, transcription factor 1-B (pou3f1-b) of Xenopus laevis (African clawed frog).